Here is a 339-residue protein sequence, read N- to C-terminus: UDP-galactose transporter homolog 1 (339 aa).

Helical transmembrane passes span I5 to L25, V43 to I63, A91 to L111, L138 to S158, S171 to A191, H208 to V228, I246 to L268, S273 to Y295, and L301 to K321.

This sequence belongs to the nucleotide-sugar transporter family. SLC35B subfamily.

It is found in the endoplasmic reticulum membrane. Functionally, may be involved in specific transport of UDP-Gal from the cytosol to the Golgi lumen. Involved in the maintenance of optimal conditions for the folding of secretory pathway proteins in the endoplasmic reticulum. This chain is UDP-galactose transporter homolog 1 (HUT1), found in Kluyveromyces lactis (strain ATCC 8585 / CBS 2359 / DSM 70799 / NBRC 1267 / NRRL Y-1140 / WM37) (Yeast).